The primary structure comprises 37 residues: Large ribosomal subunit protein bL36 (37 aa).

Belongs to the bacterial ribosomal protein bL36 family.

The polypeptide is Large ribosomal subunit protein bL36 (Caldanaerobacter subterraneus subsp. tengcongensis (strain DSM 15242 / JCM 11007 / NBRC 100824 / MB4) (Thermoanaerobacter tengcongensis)).